Consider the following 573-residue polypeptide: MENQERKPRRRRRRRPQEGSQGGPQDHVEIIPLGGMGEIGKNITVFRFRDEIFVLDGGLAFPEEGMPGVDLLIPRVDYLIEHRHKIKAWVLTHGHEDHIGGLPFLLPMIFGKESPVPIYGARLTLGLLRGKLEEFGLRPGAFNLKEISPDDRIQVGRYFTLDLFRMTHSIPDNSGVVIRTPIGTIVHTGDFKLDPTPIDGKVSHLAKVAQAGAEGVLLLIADATNAERPGYTPSEMEIAKELDRVIGRAPGRVFVTTFASHIHRIQSVIWAAEKYGRKVAMEGRSMLKFSRIALELGYLKVKDRLYTLEEVKDLPDHQVLILATGSQGQPMSVLHRLAFEGHAKMAIKPGDTVILSSSPIPGNEEAVNRVINRLYALGAYVLYPPTYKVHASGHASQEELKLILNLTTPRFFLPWHGEVRHQMNFKWLAESMSRPPEKTLIGENGAVYRLTRETFEKVGEVPHGVLYVDGLGVGDITEEILADRRHMAEEGLVVITALAGEDPVVEVVSRGFVKAGERLLGEVRRMALEALKNGVREKKPLERIRDDIYYPVKKFLKKATGRDPMILPVVIEG.

The disordered stretch occupies residues 1 to 29; sequence MENQERKPRRRRRRRPQEGSQGGPQDHVE. Residues His-93, His-95, Asp-97, His-98, His-168, and Asp-190 each contribute to the Zn(2+) site. Substrate contacts are provided by residues 259–261 and 390–394; these read ASH and HASGH. His-416 provides a ligand contact to Zn(2+).

Belongs to the metallo-beta-lactamase superfamily. RNA-metabolizing metallo-beta-lactamase-like family. Bacterial RNase J subfamily. As to quaternary structure, homodimer. May be a subunit of the RNA degradosome. The cofactor is Zn(2+).

Its subcellular location is the cytoplasm. Functionally, an RNase that has endonuclease and possibly 5'-3' exonuclease activity. Probably involved in maturation of rRNA and in some organisms also mRNA maturation and/or decay. This chain is Ribonuclease J, found in Thermus thermophilus (strain ATCC BAA-163 / DSM 7039 / HB27).